A 209-amino-acid chain; its full sequence is Large ribosomal subunit protein uL3 (209 aa).

The interval 141 to 163 (RAVGSMGASSDPSRTFKNKRMPG) is disordered.

This sequence belongs to the universal ribosomal protein uL3 family. Part of the 50S ribosomal subunit. Forms a cluster with proteins L14 and L19.

One of the primary rRNA binding proteins, it binds directly near the 3'-end of the 23S rRNA, where it nucleates assembly of the 50S subunit. This is Large ribosomal subunit protein uL3 from Clostridium botulinum (strain ATCC 19397 / Type A).